Here is a 216-residue protein sequence, read N- to C-terminus: MTDSTQTPDIPLLDAVQARLLGCLVEKEATTPDTYPLTVNAAQSAANQKTAREPVMNIDAGGVQHALRQLETLGLARQHFSSRADRYEHRLQAALDLTRQQTVLLAQLLLRGPQTLGELVTRSERLHRFADADEARHAIERLQQRALLVVLPRASGQREDRYMHLLCGEVDGAALAAKYASSGGGSEAADPGLAERVAQLEAAVAELQAQLAELRG.

This sequence belongs to the UPF0502 family.

In Stenotrophomonas maltophilia (strain R551-3), this protein is UPF0502 protein Smal_0052.